A 1160-amino-acid chain; its full sequence is MDTPGSLQVIAIISLLLVGGASQPATFLEKALPTDGPSLETIEHKTEMVNTTRSEEQSPVRPSKTRQQLIDETPEICANAWVIRLITEFPTELGNMSQKQKTIAIQVHNTTMTMEETVFSLVSHVNKKNYEIHNVSGICTKYQLVPGNFTCSTRKCISQTKEKRIISTTVKDTYEVYLPFAWSQKPTGGDKYPEPQIGYNTGTGRLNQWNKDEFVIKQCRKKRGKRQITVPNSTLSPTGTTDFTKFTPNPISPNSTALNELEQKTTPIGTEQPFNNEKWQNLIFGNIVTKMDPQCEAELFQQFNISDKTVQVEFKVTSLPGQNISCQAIYNTEHGINIENKNCVISLIKENRKIKAHAYITRTGSYEWYAQQVTSKGIIQEVRNLVTIVECECPIVKPLPQGGIIPLTMPMRVLTNPSPILIHSALKFDLSKFGLSPCSFSPMEWQTYITKPLKRAMHGFEVHQRKKRDLGIGLHSTLNSWWNGANSLGLTVESADRQKYDQKILKVLQNLAVQQRTDVKNQQTLGKALETPIYTITLQLADSLTAAILKHEQQQNVGITCKDIAILTVTQIATYLRDIQHEHLPVWFIEQITNQILLPVGQVIMPEITAPPILNPLIGWNQSVLVIGLTHQLTITTVQQPLYKAANMGNFQDWTPFPPFILANKTHGFSIDCPIMRNSFLCHTLPTPVKLSEWERSTSTIYQTSPQVWITPEGKACLNHRNITVQDRTCLINKPGCFIPKHPWSAGKQTIVPTQYIQQNFVPDTIDTEDNQTRVLQKEMIEAISKAKRDYGVLKQGQIALIRHHEAITTILGQEATYSIKETQALISSIEQEAWYNNLFSWYDGSVWSQLQLIIVVITCTIPLLWVLNTCLFFKLRRAIRRERDNNIVVEYQAQTRGRRTHMTEPITKKQRAKLLRHAKTNRRLPRSLRATPAVSAFEMVTFDPQEETVEINRIDPSHENNDHGGPMNMAPIISADSYALPTPYITIMLDRELLNQGMRKVITLLNDPAREVFNKAYNLVTTNHFTLAYGCDESAGWVNQHAEYMGKPVIVTLAGLVITPVGLAWIPLPQQEPLEKLFMVPNSMPHVTVAMADYHETKEMGKIVKDINNEELLLVKPQLFKWGPEGFFVACPLVIRGVVTGHSLLHIACPATAVQAEGT.

An N-terminal signal peptide occupies residues 1–22; that stretch reads MDTPGSLQVIAIISLLLVGGAS. The Extracellular portion of the chain corresponds to 23–853; sequence QPATFLEKAL…DGSVWSQLQL (831 aa). Residues Asn-50, Asn-95, Asn-109, Asn-134, Asn-148, Asn-232, Asn-254, Asn-304, Asn-323, Asn-621, Asn-664, Asn-722, and Asn-771 are each glycosylated (N-linked (GlcNAc...) asparagine; by host). The segment at 230–251 is disordered; sequence VPNSTLSPTGTTDFTKFTPNPI. Residues 854–874 traverse the membrane as a helical segment; the sequence is IIVVITCTIPLLWVLNTCLFF. The Cytoplasmic segment spans residues 875-1048; it reads KLRRAIRRER…VNQHAEYMGK (174 aa). A helical membrane pass occupies residues 1049 to 1069; sequence PVIVTLAGLVITPVGLAWIPL. Residues 1070-1127 lie on the Extracellular side of the membrane; sequence PQQEPLEKLFMVPNSMPHVTVAMADYHETKEMGKIVKDINNEELLLVKPQLFKWGPEG. Residues 1128–1148 traverse the membrane as a helical segment; sequence FFVACPLVIRGVVTGHSLLHI. At 1149 to 1160 the chain is on the cytoplasmic side; the sequence is ACPATAVQAEGT.

In terms of assembly, the mature envelope protein (Env) consists of a trimer of SU-TM heterodimers attached by non-covalent interactions or by a labile interchain disulfide bond. In terms of processing, specific enzymatic cleavages in vivo yield mature proteins. Envelope glycoproteins are synthesized as an inactive precursor that is N-glycosylated and processed likely by host cell furin or by a furin-like protease in the Golgi to yield the mature SU and TM proteins. The cleavage site between SU and TM requires the minimal sequence [KR]-X-[KR]-R.

It is found in the virion membrane. It localises to the host cell membrane. (SU) attaches the virus to the host cell by binding to its receptor. This interaction triggers the refolding of the transmembrane protein (TM) and is thought to activate its fusogenic potential by unmasking its fusion peptide. Fusion occurs at the host cell plasma membrane. In terms of biological role, (TM) acts as a class I viral fusion protein. Under the current model, the protein has at least 3 conformational states: pre-fusion native state, pre-hairpin intermediate state, and post-fusion hairpin state. During viral and target cell membrane fusion, the coiled coil regions (heptad repeats) assume a trimer-of-hairpins structure, positioning the fusion peptide in close proximity to the C-terminal region of the ectodomain. The formation of this structure appears to drive apposition and subsequent fusion of viral and target cell membranes. Membranes fusion leads to delivery of the nucleocapsid into the cytoplasm. The chain is Envelope glycoprotein (env) from Walleye dermal sarcoma virus (WDSV).